Consider the following 1877-residue polypeptide: Neuron navigator 1 (1877 aa).

N-acetylmethionine is present on M1. Positions 1–59 are disordered; the sequence is MLGSSVKSVQPEVELSSGGGDEGADEPRGAGRKAAAADGRGMLPKRAKAPGGGGGMAKA. Over residues 32-41 the composition is skewed to low complexity; the sequence is RKAAAADGRG. S90, S142, and S152 each carry phosphoserine. The interval 114-225 is disordered; the sequence is DMAKAPKGLG…PVPSAKGQEE (112 aa). Position 159 is a phosphothreonine (T159). Phosphoserine occurs at positions 194 and 199. Residues 205-214 show a composition bias toward low complexity; that stretch reads SSKAKAQKSS. Residues 255–280 are a coiled coil; the sequence is ESQRKRTVQNVLDLRQNLEETMSSLR. Residues 294–336 are disordered; sequence YDSDDANPRSVSSLSNRSSPLSWRYGQSSPRLQAGDAPSVGGS. Phosphoserine occurs at positions 296, 308, 312, 362, and 391. Positions 301–315 are enriched in low complexity; the sequence is PRSVSSLSNRSSPLS. Disordered stretches follow at residues 386-839 and 892-989; these read KSGY…PLPS and MSLP…PMSL. Composition is skewed to low complexity over residues 411–425 and 433–448; these read DESS…DASD and NASS…PTAS. Phosphoserine is present on residues S452, S474, S476, and S490. Residues 476-486 are compositionally biased toward basic and acidic residues; sequence SEEKAPKKLEY. A compositionally biased stretch (basic and acidic residues) spans 503–519; that stretch reads ERPESCDDSSKGGELKK. At S528 the chain carries Phosphoserine. T534 carries the post-translational modification Phosphothreonine. S541 is subject to Phosphoserine. Position 544 is a phosphothreonine (T544). The span at 555–566 shows a compositional bias: basic and acidic residues; that stretch reads GKPEGKATDKGK. Residue T572 is modified to Phosphothreonine. Positions 581-591 are enriched in basic and acidic residues; that stretch reads AGRDRLSDAKK. Composition is skewed to polar residues over residues 615–635 and 645–655; these read GTAT…QKSS and RKTSLDVSNSA. A Phosphoserine modification is found at S648. Position 688 is an omega-N-methylarginine (R688). Composition is skewed to polar residues over residues 698–710 and 724–733; these read IDPS…QGGL and GRTTPAPVNQ. Positions 731–756 form a coiled coil; that stretch reads VNQTDREKEKAKAKAVALDSDNISLK. S750, S754, S760, S797, and S808 each carry phosphoserine. Polar residues predominate over residues 751–773; it reads DNISLKSIGSPESTPKNQASHPT. A compositionally biased stretch (low complexity) spans 805–818; sequence NSNSLDLPSSSDTT. Residues 902 to 913 show a composition bias toward pro residues; the sequence is TPVPTPPAPPAA. Position 1000 is a phosphoserine (S1000). The residue at position 1006 (T1006) is a Phosphothreonine. Positions 1072–1163 form a coiled coil; that stretch reads SSAEERMQSE…SEAQAVIQGA (92 aa). A Phosphothreonine modification is found at T1170. Disordered regions lie at residues 1172–1204, 1244–1306, 1359–1383, and 1810–1843; these read KELR…KDAD, ATPD…EKKE, LKVA…LSSP, and KLYH…SLDS. S1181 is modified (phosphoserine). Positions 1181-1200 are enriched in low complexity; that stretch reads SSDSISSLNSITSHSSIGSS. Positions 1246-1264 are enriched in polar residues; that stretch reads PDSSAPSSPKLQHGSTETA. A Phosphoserine modification is found at S1265. Low complexity predominate over residues 1265-1275; that stretch reads SPSIKSSTSSS. Residues 1303–1362 are a coiled coil; that stretch reads EKKEVSELRSELWEKEMKLTDIRLEALNSAHQLDQLRETMHNMQLEVDLLKAENDRLKVA. Residues 1366–1383 show a composition bias toward polar residues; the sequence is SSGSTPGQVPGSSALSSP. The residue at position 1382 (S1382) is a Phosphoserine.

Belongs to the Nav/unc-53 family. As to quaternary structure, interacts with tubulin. In terms of tissue distribution, broadly expressed at low levels. Expressed at high levels in heart, skeletal muscle and placenta.

The protein resides in the cytoplasm. The protein localises to the cytoskeleton. May be involved in neuronal migration. The polypeptide is Neuron navigator 1 (NAV1) (Homo sapiens (Human)).